The sequence spans 256 residues: Glucosamine-6-phosphate deaminase (256 aa).

The active-site Proton acceptor; for enolization step is the Asp-68. Residue Asn-137 is the For ring-opening step of the active site. His-139 (proton acceptor; for ring-opening step) is an active-site residue. Glu-144 (for ring-opening step) is an active-site residue.

The protein belongs to the glucosamine/galactosamine-6-phosphate isomerase family. NagB subfamily.

The catalysed reaction is alpha-D-glucosamine 6-phosphate + H2O = beta-D-fructose 6-phosphate + NH4(+). It participates in amino-sugar metabolism; N-acetylneuraminate degradation; D-fructose 6-phosphate from N-acetylneuraminate: step 5/5. In terms of biological role, catalyzes the reversible isomerization-deamination of glucosamine 6-phosphate (GlcN6P) to form fructose 6-phosphate (Fru6P) and ammonium ion. The protein is Glucosamine-6-phosphate deaminase of Mycoplasmopsis pulmonis (strain UAB CTIP) (Mycoplasma pulmonis).